The sequence spans 448 residues: Delta(14)-sterol reductase ERG24 (448 aa).

Transmembrane regions (helical) follow at residues 18–38, 75–95, 108–128, 157–177, 251–271, 279–299, and 318–338; these read ISGA…FYLL, CWSA…LLPG, VLNY…LLLA, IIIC…ISFI, VTDS…DGVL, MIDI…LAWV, and NLGW…FYIF. Residues Lys345, Arg349, Leu368, Trp373, and 380–381 each bind NADP(+); that span reads NY. Residues 394-414 traverse the membrane as a helical segment; that stretch reads PTGFQTPLTYFYVIYFASLLI. NADP(+)-binding positions include Asp420, 424-428, and Tyr435; that span reads CRAKY.

Belongs to the ERG4/ERG24 family.

It is found in the endoplasmic reticulum membrane. It catalyses the reaction 4,4-dimethyl-5alpha-cholesta-8,24-dien-3beta-ol + NADP(+) = 4,4-dimethyl-5alpha-cholesta-8,14,24-trien-3beta-ol + NADPH + H(+). It participates in steroid biosynthesis; zymosterol biosynthesis; zymosterol from lanosterol: step 2/6. Functionally, C-14 sterol reductase; part of the third module of ergosterol biosynthesis pathway that includes the late steps of the pathway. ERG24 reduces the C14=C15 double bond of 4,4-dimethyl-cholesta-8,14,24-trienol to produce 4,4-dimethyl-cholesta-8,24-dienol. The third module or late pathway involves the ergosterol synthesis itself through consecutive reactions that mainly occur in the endoplasmic reticulum (ER) membrane. Firstly, the squalene synthase ERG9 catalyzes the condensation of 2 farnesyl pyrophosphate moieties to form squalene, which is the precursor of all steroids. Squalene synthase is crucial for balancing the incorporation of farnesyl diphosphate (FPP) into sterol and nonsterol isoprene synthesis. Secondly, the squalene epoxidase ERG1 catalyzes the stereospecific oxidation of squalene to (S)-2,3-epoxysqualene, which is considered to be a rate-limiting enzyme in steroid biosynthesis. Then, the lanosterol synthase ERG7 catalyzes the cyclization of (S)-2,3 oxidosqualene to lanosterol, a reaction that forms the sterol core. In the next steps, lanosterol is transformed to zymosterol through a complex process involving various demethylation, reduction and desaturation reactions. The lanosterol 14-alpha-demethylase ERG11 (also known as CYP51) catalyzes C14-demethylation of lanosterol to produce 4,4'-dimethyl cholesta-8,14,24-triene-3-beta-ol, which is critical for ergosterol biosynthesis. The C-14 reductase ERG24 reduces the C14=C15 double bond of 4,4-dimethyl-cholesta-8,14,24-trienol to produce 4,4-dimethyl-cholesta-8,24-dienol. 4,4-dimethyl-cholesta-8,24-dienol is substrate of the C-4 demethylation complex ERG25-ERG26-ERG27 in which ERG25 catalyzes the three-step monooxygenation required for the demethylation of 4,4-dimethyl and 4alpha-methylsterols, ERG26 catalyzes the oxidative decarboxylation that results in a reduction of the 3-beta-hydroxy group at the C-3 carbon to an oxo group, and ERG27 is responsible for the reduction of the keto group on the C-3. ERG28 has a role as a scaffold to help anchor ERG25, ERG26 and ERG27 to the endoplasmic reticulum and ERG29 regulates the activity of the iron-containing C4-methylsterol oxidase ERG25. Then, the sterol 24-C-methyltransferase ERG6 catalyzes the methyl transfer from S-adenosyl-methionine to the C-24 of zymosterol to form fecosterol. The C-8 sterol isomerase ERG2 catalyzes the reaction which results in unsaturation at C-7 in the B ring of sterols and thus converts fecosterol to episterol. The sterol-C5-desaturase ERG3 then catalyzes the introduction of a C-5 double bond in the B ring to produce 5-dehydroepisterol. The C-22 sterol desaturase ERG5 further converts 5-dehydroepisterol into ergosta-5,7,22,24(28)-tetraen-3beta-ol by forming the C-22(23) double bond in the sterol side chain. Finally, ergosta-5,7,22,24(28)-tetraen-3beta-ol is substrate of the C-24(28) sterol reductase ERG4 to produce ergosterol. This chain is Delta(14)-sterol reductase ERG24, found in Candida albicans (strain SC5314 / ATCC MYA-2876) (Yeast).